We begin with the raw amino-acid sequence, 686 residues long: Elongation factor G 2 (686 aa).

The 274-residue stretch at 7-280 folds into the tr-type G domain; the sequence is TTVRNLGILA…AVVAYLPSPL (274 aa). GTP contacts are provided by residues 16-23, 80-84, and 134-137; these read AHVDAGKT, DTPGH, and NKMD.

This sequence belongs to the TRAFAC class translation factor GTPase superfamily. Classic translation factor GTPase family. EF-G/EF-2 subfamily.

The protein localises to the cytoplasm. Functionally, catalyzes the GTP-dependent ribosomal translocation step during translation elongation. During this step, the ribosome changes from the pre-translocational (PRE) to the post-translocational (POST) state as the newly formed A-site-bound peptidyl-tRNA and P-site-bound deacylated tRNA move to the P and E sites, respectively. Catalyzes the coordinated movement of the two tRNA molecules, the mRNA and conformational changes in the ribosome. The chain is Elongation factor G 2 (fusB) from Streptomyces coelicolor (strain ATCC BAA-471 / A3(2) / M145).